The primary structure comprises 256 residues: Imidazole glycerol phosphate synthase subunit HisF (256 aa).

Active-site residues include D11 and D130.

The protein belongs to the HisA/HisF family. As to quaternary structure, heterodimer of HisH and HisF.

The protein localises to the cytoplasm. The catalysed reaction is 5-[(5-phospho-1-deoxy-D-ribulos-1-ylimino)methylamino]-1-(5-phospho-beta-D-ribosyl)imidazole-4-carboxamide + L-glutamine = D-erythro-1-(imidazol-4-yl)glycerol 3-phosphate + 5-amino-1-(5-phospho-beta-D-ribosyl)imidazole-4-carboxamide + L-glutamate + H(+). Its pathway is amino-acid biosynthesis; L-histidine biosynthesis; L-histidine from 5-phospho-alpha-D-ribose 1-diphosphate: step 5/9. In terms of biological role, IGPS catalyzes the conversion of PRFAR and glutamine to IGP, AICAR and glutamate. The HisF subunit catalyzes the cyclization activity that produces IGP and AICAR from PRFAR using the ammonia provided by the HisH subunit. This chain is Imidazole glycerol phosphate synthase subunit HisF, found in Psychrobacter sp. (strain PRwf-1).